A 1505-amino-acid chain; its full sequence is MLCVAGARLKRELDATATVLANRQDESEQSRKRLIEQSREFKKNTPEDLRKQVAPLLKSFQGEIDALSKRSKEAEAAFLNVYKRLIDVPDPVPALDLGQQLQLKVQRLHDIETENQKLRETLEEYNKEFAEVKNQEVTIKALKEKIREYEQTLKNQAETIALEKEQKLQNDFAEKERKLQETQMSTTSKLEEAEHKVQSLQTALEKTRTELFDLKTKYDEETTAKADEIEMIMTDLERANQRAEVAQREAETLREQLSSANHSLQLASQIQKAPDVEQAIEVLTRSSLEVELAAKEREIAQLVEDVQRLQASLTKLRENSASQISQLEQQLSAKNSTLKQLEEKLKGQADYEEVKKELNILKSMEFAPSEGAGTQDAAKPLEVLLLEKNRSLQSENAALRISNSDLSGSARRKGKDQPESRRPGSLPAPPPSQLPRNPGEQASNTNGTHQFSPAGLSQDFFSSSLASPSLPLASTGKFALNSLLQRQLMQSFYSKAMQEAGSTSMIFSTGPYSTNSISSQSPLQQSPDVNGMAPSPSQSESAGSVSEGEEMDTAEIARQVKEQLIKHNIGQRIFGHYVLGLSQGSVSEILARPKPWNKLTVRGKEPFHKMKQFLSDEQNILALRSIQGRQRENPGQSLNRLFQEVPKRRNGSEGNITTRIRASETGSDEAIKSILEQAKRELQVQKTAEPAQPSSASGSGNSDDAIRSILQQARREMEAQQAALDPALKQAPLSQSDITILTPKLLSTSPMPTVSSYPPLAISLKKPSAAPEAGASALPNPPALKKEAQDAPGLDPQGAADCAQGVLRQVKNEVGRSGAWKDHWWSAVQPERRNAASSEEAKAEETGGGKEKGSGGSGGGSQPRAERSQLQGPSSSEYWKEWPSAESPYSQSSELSLTGASRSETPQNSPLPSSPIVPMSKPTKPSVPPLTPEQYEVYMYQEVDTIELTRQVKEKLAKNGICQRIFGEKVLGLSQGSVSDMLSRPKPWSKLTQKGREPFIRMQLWLNGELGQGVLPVQGQQQGPVLHSVTSLQDPLQQGCVSSESTPKTSASCSPAPESPMSSSESVKSLTELVQQPCPPIEASKDSKPPEPSDPPASDSQPTTPLPLSGHSALSIQELVAMSPELDTYGITKRVKEVLTDNNLGQRLFGETILGLTQGSVSDLLARPKPWHKLSLKGREPFVRMQLWLNDPNNVEKLMDMKRMEKKAYMKRRHSSVSDSQPCEPPSVGTEYSQGASPQPQHQLKKPRVVLAPEEKEALKRAYQQKPYPSPKTIEDLATQLNLKTSTVINWFHNYRSRIRRELFIEEIQAGSQGQAGASDSPSARSGRAAPSSEGDSCDGVEATEGPGSADTEEPKSQGEAEREEVPRPAEQTEPPPSGTPGPDDARDDDHEGGPVEGPGPLPSPASATATAAPAAPEDAATSAAAAPGEGPAAPSSAPPPSNSSSSSAPRRPSSLQSLFGLPEAAGARDSRDNPLRKKKAANLNSIIHRLEKAASREEPIEWEF.

A coiled-coil region spans residues 56–407; the sequence is LLKSFQGEID…ALRISNSDLS (352 aa). Composition is skewed to polar residues over residues 396 to 407 and 440 to 451; these read NAALRISNSDLS and EQASNTNGTHQF. Disordered regions lie at residues 396-455, 512-552, 646-669, and 682-704; these read NAAL…SPAG, YSTN…EEMD, PKRR…GSDE, and LQVQ…NSDD. A compositionally biased stretch (low complexity) spans 516 to 546; sequence SISSQSPLQQSPDVNGMAPSPSQSESAGSVS. Phosphoserine is present on Glu540. The segment at residues 542–629 is a DNA-binding region (CUT 1); that stretch reads AGSVSEGEEM…ILALRSIQGR (88 aa). The segment covering 694 to 703 has biased composition (low complexity); the sequence is SSASGSGNSD. Ser763 carries the post-translational modification Phosphoserine. The tract at residues 768 to 802 is disordered; sequence SAAPEAGASALPNPPALKKEAQDAPGLDPQGAADC. Glycyl lysine isopeptide (Lys-Gly) (interchain with G-Cter in SUMO2) cross-links involve residues Lys785, Lys811, and Lys842. The span at 815–853 shows a compositional bias: basic and acidic residues; it reads GRSGAWKDHWWSAVQPERRNAASSEEAKAEETGGGKEKG. A disordered region spans residues 815 to 930; the sequence is GRSGAWKDHW…KPTKPSVPPL (116 aa). Polar residues-rich tracts occupy residues 868 to 877 and 887 to 911; these read SQLQGPSSSE and SPYS…NSPL. The residue at position 909 (Ser909) is a Phosphoserine. A DNA-binding region (CUT 2) is located at residues 934–1021; that stretch reads QYEVYMYQEV…QGVLPVQGQQ (88 aa). The span at 1036-1049 shows a compositional bias: polar residues; it reads LQQGCVSSESTPKT. The disordered stretch occupies residues 1036–1110; the sequence is LQQGCVSSES…QPTTPLPLSG (75 aa). Over residues 1050 to 1066 the composition is skewed to low complexity; that stretch reads SASCSPAPESPMSSSES. Residues Ser1059 and Ser1069 each carry the phosphoserine modification. A DNA-binding region (CUT 3) is located at residues 1117-1204; the sequence is QELVAMSPEL…VEKLMDMKRM (88 aa). The tract at residues 1210–1247 is disordered; sequence MKRRHSSVSDSQPCEPPSVGTEYSQGASPQPQHQLKKP. Positions 1230 to 1242 are enriched in polar residues; sequence TEYSQGASPQPQH. The homeobox DNA-binding region spans 1244 to 1303; the sequence is LKKPRVVLAPEEKEALKRAYQQKPYPSPKTIEDLATQLNLKTSTVINWFHNYRSRIRREL. At Ser1270 the chain carries Phosphoserine. Lys1284 participates in a covalent cross-link: Glycyl lysine isopeptide (Lys-Gly) (interchain with G-Cter in SUMO2). Residues 1312-1480 form a disordered region; that stretch reads SQGQAGASDS…SRDNPLRKKK (169 aa). Residues 1316-1333 are compositionally biased toward low complexity; sequence AGASDSPSARSGRAAPSS. Ser1337 is subject to Phosphoserine. Basic and acidic residues-rich tracts occupy residues 1353–1368 and 1384–1394; these read EEPK…EVPR and DDARDDDHEGG. 2 stretches are compositionally biased toward low complexity: residues 1405–1436 and 1443–1455; these read PASA…AAPS and NSSS…RPSS. At Ser1455 the chain carries Phosphoserine. Positions 1467–1476 are enriched in basic and acidic residues; it reads GARDSRDNPL. 2 positions are modified to phosphoserine: Ser1486 and Ser1496.

The protein belongs to the CUT homeobox family. In terms of assembly, interacts with BANP. Interacts with SATB1 (via DNA-binding domains); the interaction inhibits the attachment of both proteins to DNA. In terms of processing, phosphorylated by PKA. As cells progress into S phase, a fraction of CUX1 molecules is proteolytically processed into N-terminally truncated proteins of 110 kDa by CTSL. Cell cycle-dependent processing of CUX1 serves to generate a CDP/Cux p110 with distinct DNA binding and transcriptional properties.

The protein resides in the nucleus. Transcription factor involved in the control of neuronal differentiation in the brain. Regulates dendrite development and branching, and dendritic spine formation in cortical layers II-III. Also involved in the control of synaptogenesis. In addition, it has probably a broad role in mammalian development as a repressor of developmentally regulated gene expression. May act by preventing binding of positively-activing CCAAT factors to promoters. Component of nf-munr repressor; binds to the matrix attachment regions (MARs) (5' and 3') of the immunoglobulin heavy chain enhancer. Represses T-cell receptor (TCR) beta enhancer function by binding to MARbeta, an ATC-rich DNA sequence located upstream of the TCR beta enhancer. Binds to the TH enhancer; may require the basic helix-loop-helix protein TCF4 as a coactivator. Its function is as follows. Plays a role in cell cycle progression, in particular at the G1/S transition. As cells progress into S phase, a fraction of CUX1 molecules is proteolytically processed into N-terminally truncated proteins of 110 kDa. While CUX1 only transiently binds to DNA and carries the CCAAT-displacement activity, CDP/Cux p110 makes a stable interaction with DNA and stimulates expression of genes such as POLA1. The polypeptide is Homeobox protein cut-like 1 (Homo sapiens (Human)).